A 184-amino-acid chain; its full sequence is Cytochrome c homolog (184 aa).

Over 1–10 the chain is Cytoplasmic; the sequence is MDSFELNKIL. Residues 11 to 31 traverse the membrane as a helical; Signal-anchor segment; that stretch reads GAVLGTCLILLVTSFTANALF. The Periplasmic portion of the chain corresponds to 32–184; the sequence is SPKMPEKPGF…HPKPLPTASK (153 aa). 4 residues coordinate heme c: Cys84, Cys87, His88, and Met151.

Belongs to the cytochrome c family. In terms of processing, binds 1 heme c group covalently per subunit.

It localises to the cell membrane. Its function is as follows. May be involved in electron transfer from bc1 complex to aa3. The sequence is that of Cytochrome c homolog (cycM) from Bradyrhizobium diazoefficiens (strain JCM 10833 / BCRC 13528 / IAM 13628 / NBRC 14792 / USDA 110).